Consider the following 1024-residue polypeptide: Multidrug resistance protein MdtC (1024 aa).

11 helical membrane passes run 15 to 35, 333 to 353, 360 to 380, 387 to 407, 431 to 451, 463 to 483, 528 to 548, 853 to 873, 897 to 917, 953 to 973, and 984 to 1004; these read WLLT…LPVA, EVEQ…FAFL, LIPA…MYLC, LSLM…IVVL, VGFT…PLLL, FAIT…TLTP, WGLL…ISIP, LWLI…LYES, LFNA…IGIV, PIIM…LGSG, and ITIV…TPVV.

Belongs to the resistance-nodulation-cell division (RND) (TC 2.A.6) family. MdtC subfamily. Part of a tripartite efflux system composed of MdtA, MdtB and MdtC. MdtC forms a heteromultimer with MdtB.

It is found in the cell inner membrane. The protein is Multidrug resistance protein MdtC of Erwinia tasmaniensis (strain DSM 17950 / CFBP 7177 / CIP 109463 / NCPPB 4357 / Et1/99).